The primary structure comprises 196 residues: MLDRIKVCFTESIQTQIAAAEALPDAISRAAMTLVHSLLNGNKILCCGNGTSAANAQHFAASMINRFETERPSLPAIALNTDNVVLTAIANDRLHDEIYAKQVRALGHAGDVLLAISTRGNSRDIVKAVEAAVTRDMTIVALTGYDGGELAGLLGPQDVEIRIPSHHSARIQEMHMLTVNCLCDLIDNTLFPHQDD.

Positions 34–196 (LVHSLLNGNK…DNTLFPHQDD (163 aa)) constitute an SIS domain.

This sequence belongs to the SIS family. DiaA subfamily. Homotetramer; dimer of dimers.

Functionally, required for the timely initiation of chromosomal replication via direct interactions with the DnaA initiator protein. This is DnaA initiator-associating protein DiaA from Citrobacter koseri (strain ATCC BAA-895 / CDC 4225-83 / SGSC4696).